The primary structure comprises 951 residues: Metal transporter CNNM1 (951 aa).

The helical transmembrane segment at 23–43 (AVLLLFFSLSPRPPAAAAWLL) threads the bilayer. Residues 114 to 138 (GAGGAAPSAVPTRPPGPQRCREQSD) are disordered. A CNNM transmembrane domain is found at 218 to 414 (LLPPAWLRAL…DPYSDLVKEE (197 aa)). Transmembrane regions (helical) follow at residues 222-242 (AWLR…FSGL), 282-302 (LLCT…GWLY), and 319-339 (AGVH…FLGA). CBS domains follow at residues 433 to 495 (LTPL…CTPL) and 502 to 568 (YNRP…ILDE). Polar residues-rich tracts occupy residues 731 to 740 (SRCSGLNRSE) and 814 to 824 (KAPTTRGTPQT). Disordered stretches follow at residues 731–754 (SRCS…GSNT) and 795–830 (MDSS…DDPV). Phosphothreonine is present on residues Thr-821 and Thr-824. Ser-850 carries the post-translational modification Phosphoserine. Positions 903-951 (DPEASPCSSDSEENMGKKLLRTLSGRKRKKSADGERASEENSNLTPLIT) are disordered. Residues 920 to 932 (KLLRTLSGRKRKK) are compositionally biased toward basic residues. Residues 942–951 (ENSNLTPLIT) are compositionally biased toward polar residues.

Belongs to the ACDP family. As to expression, predominantly expressed in brain and testis, and, at lower levels, in kidney. In the brain, expressed in hippocampal neurons (at protein level).

It is found in the cell membrane. Functionally, probable metal transporter. This is Metal transporter CNNM1 (Cnnm1) from Mus musculus (Mouse).